The chain runs to 103 residues: Large ribosomal subunit protein uL24 (103 aa).

This sequence belongs to the universal ribosomal protein uL24 family. In terms of assembly, part of the 50S ribosomal subunit.

In terms of biological role, one of two assembly initiator proteins, it binds directly to the 5'-end of the 23S rRNA, where it nucleates assembly of the 50S subunit. Functionally, one of the proteins that surrounds the polypeptide exit tunnel on the outside of the subunit. This is Large ribosomal subunit protein uL24 from Sinorhizobium medicae (strain WSM419) (Ensifer medicae).